Reading from the N-terminus, the 444-residue chain is IMP-specific 5'-nucleotidase 1 (444 aa).

Positions 132 and 150 each coordinate ATP. D170 serves as the catalytic Nucleophile. IMP contacts are provided by D170, D172, D178, T204, S207, S308, D363, and K371. Mg(2+) contacts are provided by D170 and D172. Catalysis depends on D172, which acts as the Proton donor. D394 provides a ligand contact to Mg(2+).

This sequence belongs to the ISN1 family. As to quaternary structure, homotetramer. Mg(2+) is required as a cofactor.

The protein resides in the cytoplasm. It carries out the reaction IMP + H2O = inosine + phosphate. Its activity is regulated as follows. At physiological pH, allosterically activated by ATP. ATP binding is a prerequisite to magnesium and substrate binding. ATP binds to 2 of the subunits in the homotetramer inducing a closure of these 2 subunits and the release of the C-terminal loop, thereby activating the enzyme. In this conformation, the enzyme can bind IMP and magnesium which ultimately leads to the release of ATP. At pH 5, ATP does not have an allosteric role and is dispensable for magnesium and substrate binding. Inhibited by phosphocholine and D-myo-inositol-4-phosphate. Functionally, specifically, catalyzes the dephosphorylation of inosine monophosphate (IMP) into inosine. By dephosphorylating IMP, plays a role in the purine salvage pathway. Does not have phosphotransferase activity with IMP as phosphate donor and adenosine as phosphate acceptor. The polypeptide is IMP-specific 5'-nucleotidase 1 (Plasmodium falciparum (isolate 3D7)).